The sequence spans 2569 residues: Highly reducing polyketide synthase pks5 (2569 aa).

The interval 1–25 (MVVKFANGVRNRGNGDEGQRGTQRP) is disordered. The 426-residue stretch at 27–452 (STPIAIVGMS…GTNVHVIMEA (426 aa)) folds into the Ketosynthase family 3 (KS3) domain. Catalysis depends on for beta-ketoacyl synthase activity residues cysteine 200, histidine 335, and histidine 375. The malonyl-CoA:ACP transacylase (MAT) domain stretch occupies residues 572–892 (IFNGQGAQWY…PYLSCLRRNI (321 aa)). The segment at 960 to 1097 (HELLGSSVPG…GYVSAEDSSK (138 aa)) is N-terminal hotdog fold. The interval 960-1268 (HELLGSSVPG…LRLQKIQAED (309 aa)) is dehydratase (DH) domain. The PKS/mFAS DH domain occupies 960 to 1270 (HELLGSSVPG…LQKIQAEDDN (311 aa)). The active-site Proton acceptor; for dehydratase activity is the histidine 992. The tract at residues 1117–1270 (RVRHVRPDAM…LQKIQAEDDN (154 aa)) is C-terminal hotdog fold. The active-site Proton donor; for dehydratase activity is the aspartate 1179. Residues 1457–1567 (LEVGAGTGGA…RKLLKPKGKL (111 aa)) form a methyltransferase (CMet) domain region. Positions 1855–2170 (DLLNKIEFLE…SGTHMGKIVL (316 aa)) are enoyl reductase (ER) domain. Residues 2195–2371 (THLIVGGLRG…AISINLGPVD (177 aa)) are ketoreductase (KR) domain. The 78-residue stretch at 2485 to 2562 (AARKLVSELI…DFAALVASRS (78 aa)) folds into the Carrier domain. Serine 2522 carries the post-translational modification O-(pantetheine 4'-phosphoryl)serine.

Its function is as follows. Highly reducing polyketide synthase; part of the gene cluster that mediates the biosynthesis of abscisic acid (ABA), a phytohormone that acts antagonistically toward salicylic acid (SA), jasmonic acid (JA) and ethylene (ETH) signaling, to impede plant defense responses. The first step of the pathway catalyzes the reaction from farnesyl diphosphate to alpha-ionylideneethane performed by the alpha-ionylideneethane synthase abl3 via a three-step reaction mechanism involving 2 neutral intermediates, beta-farnesene and allofarnesene. The cytochrome P450 monooxygenase abl1 might then be involved in the conversion of alpha-ionylideneethane to alpha-ionylideneacetic acid. Alpha-ionylideneacetic acid is further converted to abscisic acid in 2 steps involving the cytochrome P450 monooxygenase abl2 and the short-chain dehydrogenase/reductase abl4, via the intermediates 1'-deoxy-ABA or 1',4'-trans-diol-ABA, depending on the order of action of these 2 enzymes. Abl2 is responsible for the hydroxylation of carbon atom C-1' and abl4 might be involved in the oxidation of the C-4' carbon atom. Pks5 is clearly not involved in the production of ABA. Nonetheless, the possibility cannot be excluded that pks5 may modify ABA into another compound. It also cannot be excluded the possibility that pks5 also has a function completely independent of ABA synthesis. Pks5 is not required for pathogenicity on B.napus cotyledon. This Leptosphaeria maculans (strain JN3 / isolate v23.1.3 / race Av1-4-5-6-7-8) (Blackleg fungus) protein is Highly reducing polyketide synthase pks5.